The primary structure comprises 278 residues: Envelope glycoprotein L (278 aa).

The first 30 residues, 1–30 (MCRRPDCGFSFSPGPVILLWCCLLLPIVSS), serve as a signal peptide directing secretion. The gL betaherpesvirus-type domain occupies 43–256 (VPAECPELTR…DKYYAGLPPE (214 aa)). The cysteines at positions 154 and 159 are disulfide-linked.

It belongs to the herpesviridae glycoprotein L (gL) family. Betaherpesvirinae gL subfamily. Interacts with glycoprotein H (gH); this interaction is necessary for the correct processing and cell surface expression of gH. Forms the envelope pentamer complex (PC) composed of gH, gL, UL128, UL130, and UL131A. The pentamer interacts with host NRP2. Forms the envelope trimer complex composed of gH, gL, and gO. The trimer interacts with host PDGFRA.

It localises to the virion membrane. The protein localises to the host cell membrane. Its subcellular location is the host Golgi apparatus. It is found in the host trans-Golgi network. Functionally, the heterodimer glycoprotein H-glycoprotein L is required for the fusion of viral and plasma membranes leading to virus entry into the host cell. Acts as a functional inhibitor of gH and maintains gH in an inhibited form. Upon binding to host integrins, gL dissociates from gH leading to activation of the viral fusion glycoproteins gB and gH. In human cytomegalovirus, forms two distincts complexes to mediate viral entry, a trimer and a pentamer at the surface of the virion envelope. The gH-gL-gO trimer is required for infection in fibroblasts by interacting with host PDGFRA. The gH-gL-UL128-UL130-UL131A pentamer is essential for viral entry in epithelial, endothelial and myeloid cells via interaction with host NRP2. The sequence is that of Envelope glycoprotein L from Human cytomegalovirus (strain PT) (HHV-5).